A 147-amino-acid polypeptide reads, in one-letter code: Hemoglobin subunit beta-1 (147 aa).

Residues 3-147 (EWTAAERRHV…VVSALGRQYH (145 aa)) enclose the Globin domain. Heme b contacts are provided by H64 and H93.

Belongs to the globin family. As to quaternary structure, hb 1 is a heterotetramer of two alpha-1 and two beta-1 chains. Red blood cells.

Involved in oxygen transport from gills to the various peripheral tissues. The polypeptide is Hemoglobin subunit beta-1 (hbb1) (Gadus morhua (Atlantic cod)).